The following is a 119-amino-acid chain: Large ribosomal subunit protein bL17 (119 aa).

It belongs to the bacterial ribosomal protein bL17 family. Part of the 50S ribosomal subunit. Contacts protein L32.

The protein is Large ribosomal subunit protein bL17 of Ureaplasma parvum serovar 3 (strain ATCC 27815 / 27 / NCTC 11736).